The primary structure comprises 153 residues: Flagellar assembly factor FliW (153 aa).

The protein belongs to the FliW family. Interacts with translational regulator CsrA and flagellin(s).

It localises to the cytoplasm. Its function is as follows. Acts as an anti-CsrA protein, binds CsrA and prevents it from repressing translation of its target genes, one of which is flagellin. Binds to flagellin and participates in the assembly of the flagellum. The polypeptide is Flagellar assembly factor FliW (Heliobacterium modesticaldum (strain ATCC 51547 / Ice1)).